We begin with the raw amino-acid sequence, 141 residues long: ATP synthase epsilon chain (141 aa).

This sequence belongs to the ATPase epsilon chain family. As to quaternary structure, F-type ATPases have 2 components, CF(1) - the catalytic core - and CF(0) - the membrane proton channel. CF(1) has five subunits: alpha(3), beta(3), gamma(1), delta(1), epsilon(1). CF(0) has three main subunits: a, b and c.

The protein localises to the cell membrane. Produces ATP from ADP in the presence of a proton gradient across the membrane. The protein is ATP synthase epsilon chain of Lactococcus lactis subsp. cremoris (strain SK11).